The primary structure comprises 566 residues: Membrane protein insertase YidC (566 aa).

The helical transmembrane segment at 7 to 27 threads the bilayer; it reads ILIVALAIVSYVMVLKWNQDY. The interval 38-72 is disordered; the sequence is ASSTTAPGLPDAPTGTSAANDDIPRAASDTTAPAE. 5 consecutive transmembrane segments (helical) span residues 347–367, 373–393, 443–463, 474–494, and 521–541; these read LELT…FWLL, LVGN…GIFF, LGGC…YWVL, FMLW…PIIM, and PIIF…YWVV.

This sequence belongs to the OXA1/ALB3/YidC family. Type 1 subfamily. Interacts with the Sec translocase complex via SecD. Specifically interacts with transmembrane segments of nascent integral membrane proteins during membrane integration.

It is found in the cell inner membrane. Functionally, required for the insertion and/or proper folding and/or complex formation of integral membrane proteins into the membrane. Involved in integration of membrane proteins that insert both dependently and independently of the Sec translocase complex, as well as at least some lipoproteins. Aids folding of multispanning membrane proteins. In Pseudomonas fluorescens (strain ATCC BAA-477 / NRRL B-23932 / Pf-5), this protein is Membrane protein insertase YidC.